The chain runs to 334 residues: 4-hydroxyproline 2-epimerase (334 aa).

Cysteine 90 functions as the Proton acceptor in the catalytic mechanism. Substrate-binding positions include 91-92 (GH), histidine 223, and aspartate 249. Cysteine 253 (proton donor) is an active-site residue. Residue 254–255 (GT) coordinates substrate.

It belongs to the proline racemase family. Homodimer.

It carries out the reaction trans-4-hydroxy-L-proline = cis-4-hydroxy-D-proline. Catalyzes the epimerization of trans-4-hydroxy-L-proline (t4LHyp) to cis-4-hydroxy-D-proline (c4DHyp). Is likely involved in a degradation pathway that converts t4LHyp to alpha-ketoglutarate, which would allow P.denitrificans to grow on t4LHyp as a sole carbon source. Also seems to be involved in an alternative catabolic pathway that degrades trans-4-hydroxy-L-proline betaine (tHyp-B) to alpha-ketoglutarate; this pathway would permit the utilization of tHyp-B as a sole carbon and nitrogen source. The protein is 4-hydroxyproline 2-epimerase (hypF) of Paracoccus denitrificans (strain Pd 1222).